The primary structure comprises 260 residues: Opacity protein opA58 (260 aa).

An N-terminal signal peptide occupies residues 1–23 (MNPAPKKPSLLFSSLLFSSAAQA).

Belongs to the opacity porin family.

The protein localises to the cell outer membrane. Implicated in a number of adherence functions. OPA proteins are implicated in pathogenesis and are subject to phase variation. The polypeptide is Opacity protein opA58 (opaJ) (Neisseria gonorrhoeae).